The chain runs to 255 residues: Taurine import ATP-binding protein TauB (255 aa).

The 228-residue stretch at 2 to 229 (LQISHLYADY…RFVAGESSRS (228 aa)) folds into the ABC transporter domain. 34–41 (GPSGCGKT) lines the ATP pocket.

This sequence belongs to the ABC transporter superfamily. Taurine importer (TC 3.A.1.17.1) family. The complex is composed of two ATP-binding proteins (TauB), two transmembrane proteins (TauC) and a solute-binding protein (TauA).

The protein resides in the cell inner membrane. The catalysed reaction is taurine(out) + ATP + H2O = taurine(in) + ADP + phosphate + H(+). In terms of biological role, part of the ABC transporter complex TauABC involved in taurine import. Responsible for energy coupling to the transport system. The sequence is that of Taurine import ATP-binding protein TauB from Escherichia coli O6:H1 (strain CFT073 / ATCC 700928 / UPEC).